Consider the following 518-residue polypeptide: Suppressor of hairless homolog (518 aa).

The disordered stretch occupies residues 22–59 (ETDQQRSHVKERVNGTPNQNGGTSTSSKPRSVFENRPP). The segment covering 24 to 34 (DQQRSHVKERV) has biased composition (basic and acidic residues). Polar residues predominate over residues 36–50 (GTPNQNGGTSTSSKP). 3 consecutive DNA-binding regions follow at residues 89 to 96 (KSYGNEKR), 223 to 232 (RLRSQTVSTR), and 296 to 328 (RKVD…ERMY). Positions 386–476 (PVVHSLQLNG…YPTNLTFTFT (91 aa)) constitute an IPT/TIG domain.

Belongs to the Su(H) family. Interacts with activated Notch proteins.

It localises to the nucleus. Transcriptional regulator that plays a central role in Notch signaling, a signaling pathway involved in cell-cell communication that regulates a broad spectrum of cell-fate determinations. Acts as a transcriptional repressor when it is not associated with Notch proteins. When associated with some Notch protein, it acts as a transcriptional activator that activates transcription of Notch target genes. The protein is Suppressor of hairless homolog (RBP-JK) of Halocynthia roretzi (Sea squirt).